The chain runs to 391 residues: MAEESSCTRDCMSFSVLNWDQVSRLHEVLTEVVPIHGRGNFPTLEITLKDIVQTVRSRLEEAGIKVHDVRLNGSAAGHVLVKDNGLGCKDLDLIFHVALPTEAEFQLVRDVVLCSLLNFLPEGVNKLKISPVTLKEAYVQKLVKVCTDTDRWSLISLSNKNGKNVELKFVDSIRRQFEFSVDSFQIILDSLLFFYDCSNNPISEHFHPTVIGESMYGDFEEAFDHLQNRLIATKNPEEIRGGGLLKYSNLLVRDFRPTDQEEIKTLERYMCSRFFIDFPDILEQQRKLETYLQNHFAEEERSKYDYLMILRRVVNESTVCLMGHERRQTLNLISLLALRVLAEQNIIPSATNVTCYYQPAPYVSDGNFSNYYVAHPPVTYSQPYPTWLPCN.

Belongs to the TENT family. As to quaternary structure, interacts with BCCIP and PABPC1; the interaction has no effect on TENT5C poly(A) polymerase function. Interacts with PLK4; this interaction leads to the TENT5C recruitment into the centrosome.

It localises to the nucleus. The protein localises to the cytoplasm. It is found in the cytoskeleton. The protein resides in the microtubule organizing center. Its subcellular location is the centrosome. It catalyses the reaction RNA(n) + ATP = RNA(n)-3'-adenine ribonucleotide + diphosphate. Catalyzes the transfer of one adenosine molecule from an ATP to an mRNA poly(A) tail bearing a 3'-OH terminal group and enhances mRNA stability and gene expression. Can also elongate RNA oligos ending with uridine molecule, provided that the sequence is adenosine-rich. Mainly targets mRNAs encoding endoplasmic reticulum-targeted protein. Functionally, (Microbial infection) Seems to enhance replication of some viruses, including yellow fever virus, in response to type I interferon. This chain is Terminal nucleotidyltransferase 5C, found in Homo sapiens (Human).